A 157-amino-acid polypeptide reads, in one-letter code: Urease accessory protein UreE (157 aa).

Belongs to the UreE family.

It localises to the cytoplasm. Functionally, involved in urease metallocenter assembly. Binds nickel. Probably functions as a nickel donor during metallocenter assembly. In Corynebacterium glutamicum (strain R), this protein is Urease accessory protein UreE.